We begin with the raw amino-acid sequence, 308 residues long: uncharacterized protein (308 aa).

Residues 191-211 (YLCLNLPYIIVALTLVPYSLV) form a helical membrane-spanning segment.

Its subcellular location is the host membrane. This is an uncharacterized protein from Saccharolobus islandicus (Sulfolobus islandicus).